The sequence spans 327 residues: Gonadotropin-releasing hormone receptor (327 aa).

The Extracellular portion of the chain corresponds to 1-38; that stretch reads MANNASLEQDPNHCSAINNSIPLIQGKLPTLTVSGKIR. 2 N-linked (GlcNAc...) asparagine glycosylation sites follow: N4 and N18. A helical membrane pass occupies residues 39–58; the sequence is VTVTFFLFLLSTAFNASFLL. Residues 59–77 lie on the Cytoplasmic side of the membrane; it reads KLQKWTQKRKKGKKLSRMK. The helical transmembrane segment at 78 to 97 threads the bilayer; that stretch reads VLLKHLTLANLLETLIVMPL. Over 98–115 the chain is Extracellular; that stretch reads DGMWNITVQWYAGEFLCK. A glycan (N-linked (GlcNAc...) asparagine) is linked at N102. A disulfide bridge links C114 with C195. The chain crosses the membrane as a helical span at residues 116–137; sequence VLSYLKLFSMYAPAFMMVVISL. The Cytoplasmic segment spans residues 138–164; it reads DRSLAITQPLAVQSNSKLEQSMISLAW. Residues 165–184 form a helical membrane-spanning segment; sequence ILSIVFAGPQLYIFRMIYLA. Residues 185–211 are Extracellular-facing; the sequence is DGSGPTVFSQCVTHCSFPQWWHQAFYN. The helical transmembrane segment at 212-231 threads the bilayer; it reads FFTFGCLFIIPLLIMLICNA. Residues 232–280 lie on the Cytoplasmic side of the membrane; it reads KIIFALTRVLHQDPRKLQLNQSKNNIPRARLRTLKMTVAFATSFVVCWT. Residues 281–299 form a helical membrane-spanning segment; the sequence is PYYVLGIWYWFDPEMLNRV. Residues 300–305 lie on the Extracellular side of the membrane; that stretch reads SEPVNH. The chain crosses the membrane as a helical span at residues 306–325; the sequence is FFFLFAFLNPCFDPLIYGYF. Topologically, residues 326-327 are cytoplasmic; sequence SL.

The protein belongs to the G-protein coupled receptor 1 family. Pituitary gland.

It localises to the cell membrane. Receptor for gonadotropin releasing hormone (GnRH) that mediates the action of GnRH to stimulate the secretion of the gonadotropic hormones luteinizing hormone (LH) and follicle-stimulating hormone (FSH). This receptor mediates its action by association with G-proteins that activate a phosphatidylinositol-calcium second messenger system. This is Gonadotropin-releasing hormone receptor (Gnrhr) from Mus musculus (Mouse).